Here is a 153-residue protein sequence, read N- to C-terminus: Nucleoside diphosphate kinase (153 aa).

K13, F61, R89, T95, R106, and N116 together coordinate ATP. T95 bears the Phosphothreonine mark. Catalysis depends on H119, which acts as the Pros-phosphohistidine intermediate.

It belongs to the NDK family. As to quaternary structure, homohexamer and homotetramer. Interacts with TOM40 preferentially in an unfolded, unphosphorylated form. It depends on Mg(2+) as a cofactor. The N-terminus is blocked.

It is found in the cytoplasm. It localises to the mitochondrion intermembrane space. The catalysed reaction is a 2'-deoxyribonucleoside 5'-diphosphate + ATP = a 2'-deoxyribonucleoside 5'-triphosphate + ADP. The enzyme catalyses a ribonucleoside 5'-diphosphate + ATP = a ribonucleoside 5'-triphosphate + ADP. Its function is as follows. Major role in the synthesis of nucleoside triphosphates other than ATP. The ATP gamma phosphate is transferred to the NDP beta phosphate via a ping-pong mechanism, using a phosphorylated active-site intermediate. Required for repair of UV radiation- and etoposide-induced DNA damage. This chain is Nucleoside diphosphate kinase (YNK1), found in Saccharomyces cerevisiae (strain ATCC 204508 / S288c) (Baker's yeast).